Reading from the N-terminus, the 57-residue chain is Small ribosomal subunit protein bS21 (57 aa).

It belongs to the bacterial ribosomal protein bS21 family.

This Lysinibacillus sphaericus (strain C3-41) protein is Small ribosomal subunit protein bS21.